A 278-amino-acid chain; its full sequence is Neuronal membrane glycoprotein M6-a (278 aa).

The residue at position 1 (M1) is an N-acetylmethionine. Residues 1 to 22 (MEENMEEGQTQKGCFECCIKCL) are Cytoplasmic-facing. The chain crosses the membrane as a helical span at residues 23-43 (GGIPYASLIATILLYAGVALF). Residues 44 to 84 (CGCGHEALSGTVNILQTYFEMARTAGDTLDVFTMIDIFKYV) lie on the Extracellular side of the membrane. Residues 85–105 (IYGIAAAFFVYGILLMVEGFF) traverse the membrane as a helical segment. Residues 106–127 (TTGAIKDLYGDFKITTCGRCVS) lie on the Cytoplasmic side of the membrane. Residues 128 to 148 (AWFIMLTYLFMLAWLGVTAFT) form a helical membrane-spanning segment. At 149–213 (SLPVYMYFNL…STELNMTFHL (65 aa)) the chain is on the extracellular side. The N-linked (GlcNAc...) asparagine glycan is linked to N164. Cysteines 174 and 192 form a disulfide. A glycan (N-linked (GlcNAc...) asparagine) is linked at N208. Residues 214 to 234 (FIVALAGAGAAVIAMVHYLMV) traverse the membrane as a helical segment. Residues 235–278 (LSANWAYVKDACRMQKYEDIKSKEEQELHDIHSTRSKERLNAYT) lie on the Cytoplasmic side of the membrane. S256 carries the phosphoserine modification. T278 is subject to Phosphothreonine.

The protein belongs to the myelin proteolipid protein family. As to quaternary structure, interacts with OPRM1. Interacts with palmitoyltransferase ZDHHC17/HIP14; the interaction leads to palmitoylation of GPM6A. In terms of processing, N-glycosylated. Palmitoylated by ZDHHC17/HIP14.

The protein localises to the cell membrane. The protein resides in the cell projection. It localises to the axon. Its subcellular location is the growth cone. It is found in the dendritic spine. The protein localises to the filopodium. The protein resides in the neuron projection. Functionally, involved in neuronal differentiation, including differentiation and migration of neuronal stem cells. Plays a role in neuronal plasticity and is involved in neurite and filopodia outgrowth, filopodia motility and probably synapse formation. GPM6A-induced filopodia formation involves mitogen-activated protein kinase (MAPK) and Src signaling pathways. May be involved in neuronal NGF-dependent Ca(2+) influx. May be involved in regulation of endocytosis and intracellular trafficking of G-protein-coupled receptors (GPCRs); may enhance internalization and recycling of mu-type opioid receptor. The sequence is that of Neuronal membrane glycoprotein M6-a (GPM6A) from Bos taurus (Bovine).